The sequence spans 415 residues: NAD-dependent protein deacetylase hst4 (415 aa).

The segment at 1 to 26 (MKVEEHVPLIQESRKRKCQSSENASK) is disordered. A Deacetylase sirtuin-type domain is found at 40–337 (TGNENVDLSP…RRLKPLLDAP (298 aa)). Residues 65–84 (GAGI…EGLF) and 153–156 (QNID) contribute to the NAD(+) site. The active-site Proton acceptor is the H184. Zn(2+) is bound by residues C192, C195, C214, and C217. NAD(+) is bound by residues 273–275 (GTS), 303–305 (NYD), and L323.

Belongs to the sirtuin family. Class I subfamily. Zn(2+) is required as a cofactor.

Its subcellular location is the nucleus. It localises to the nucleolus. The catalysed reaction is N(6)-acetyl-L-lysyl-[protein] + NAD(+) + H2O = 2''-O-acetyl-ADP-D-ribose + nicotinamide + L-lysyl-[protein]. NAD-dependent histone deacetylase, which contributes to both telomeric and centromeric silencing, proper cell cycle progression, DNA damage control, recombination, and genomic maintenance. This is NAD-dependent protein deacetylase hst4 (hst4) from Schizosaccharomyces pombe (strain 972 / ATCC 24843) (Fission yeast).